The primary structure comprises 355 residues: UDP-3-O-acylglucosamine N-acyltransferase (355 aa).

The active-site Proton acceptor is the His258.

Belongs to the transferase hexapeptide repeat family. LpxD subfamily. In terms of assembly, homotrimer.

It catalyses the reaction a UDP-3-O-[(3R)-3-hydroxyacyl]-alpha-D-glucosamine + a (3R)-hydroxyacyl-[ACP] = a UDP-2-N,3-O-bis[(3R)-3-hydroxyacyl]-alpha-D-glucosamine + holo-[ACP] + H(+). The protein operates within bacterial outer membrane biogenesis; LPS lipid A biosynthesis. Functionally, catalyzes the N-acylation of UDP-3-O-acylglucosamine using 3-hydroxyacyl-ACP as the acyl donor. Is involved in the biosynthesis of lipid A, a phosphorylated glycolipid that anchors the lipopolysaccharide to the outer membrane of the cell. The protein is UDP-3-O-acylglucosamine N-acyltransferase of Rhizobium rhizogenes (strain K84 / ATCC BAA-868) (Agrobacterium radiobacter).